The chain runs to 245 residues: MSQSTSVFRRNGFTFKQFFVAHDRCAMKVGTDGILLGAWAPVAGVKRCLDIGAGSGLLALMLAQRTDDSVMIDAVELESEAAAQAQENINQSPWAERINVHTADILQWITQQTVRFDLIISNPPYYQQGVECATPQREQARYTTTLDHPSLLTCAAECITEEGFFCVVLPEQIGNGFTELALSMGWHLRLRTDVAENEARLPHRVLLAFSPQAGECFSDRLVIRGPDQNYSEAYTALTQAFYLFM.

The protein belongs to the methyltransferase superfamily. tRNA (adenine-N(6)-)-methyltransferase family.

It localises to the cytoplasm. The catalysed reaction is adenosine(37) in tRNA1(Val) + S-adenosyl-L-methionine = N(6)-methyladenosine(37) in tRNA1(Val) + S-adenosyl-L-homocysteine + H(+). Functionally, specifically methylates the adenine in position 37 of tRNA(1)(Val) (anticodon cmo5UAC). This chain is tRNA1(Val) (adenine(37)-N6)-methyltransferase, found in Escherichia coli (strain UTI89 / UPEC).